A 337-amino-acid chain; its full sequence is 2-oxoglutarate-dependent dioxygenase frbA (337 aa).

One can recognise a Fe2OG dioxygenase domain in the interval 175-290 (CSAELRLNHY…RHSLAYFGKP (116 aa)). Fe cation contacts are provided by H202, D204, and H262. R281 contacts 2-oxoglutarate.

It belongs to the iron/ascorbate-dependent oxidoreductase family. Fe(2+) serves as cofactor.

Its pathway is antifungal biosynthesis. Functionally, 2-oxoglutarate-dependent dioxygenase; part of the gene cluster that mediates the biosynthesis of the antifungal antibiotic FR901469, an inhibitor of beta-1,3-glucansynthase, exerting antifungal activity against the pathogenes Candida albicans and Aspergillus fumigatus. FR901469 is a cyclic depsipeptide containing 12 amino acid residues and a fatty acid chain. The NRPS frbI contains 12 modules responsible for the formation of the depsipeptide backbone which is denoted as Acyl-Thr-Ala-Tyr-Val-4OHPro-Thr-Thr-3OHPro-threo3OHGln-Gly-Thr-Orn-OH (C71H116N14O23). The PKS frbB is probably involved in the production of the hydrocarbon chain, and the acyl-CoA ligase frbC might be involved in the transport of the chain to the peptide ptoduct of frbI. Because FR901469 contains 3 hydroxylated amino acid residues, the 3 oxygenases frbA, frbH, and frbJ might be participating in amino acid hydroxylation. As no thioesterase domains were detected in frbI or frbB, the thioesterases frbD and frbE may instead release and cyclize the products of the NRPS and PKS, respectively. The polypeptide is 2-oxoglutarate-dependent dioxygenase frbA (Dothideomycetidae sp. (strain 11243) (Fungal sp. (strain No.11243))).